Reading from the N-terminus, the 687-residue chain is RNA-binding protein VTS1 (687 aa).

Residues 1–10 show a composition bias toward basic residues; that stretch reads MASHTLRPHR. Disordered regions lie at residues 1–115, 248–341, and 526–598; these read MASH…TPEA, AAAK…PGIG, and SPFN…AGVA. The segment covering 29–41 has biased composition (polar residues); sequence TRQSLGPPTSGNS. Residues 52 to 68 are compositionally biased toward low complexity; the sequence is GLASPSSPSQPRHVSSS. Polar residues predominate over residues 287 to 301; it reads GLESNMSGRSRSKSP. The span at 305-324 shows a compositional bias: basic and acidic residues; it reads PRPKSTDFSGKPRESLRRES. Positions 526–539 are enriched in polar residues; the sequence is SPFNASAPSLQPGL. Positions 550–566 are enriched in low complexity; it reads QSSHLNQHYNQHQQQHQ. Gly residues predominate over residues 585–597; sequence QTGGGGAGGGAGV. The SAM domain maps to 606–667; that stretch reads KVLEDVPNWL…LKVFYNVRTK (62 aa).

The protein belongs to the VTS1 family. As to quaternary structure, monomer. Binds to RNA.

Its subcellular location is the cytoplasm. The protein localises to the cytosol. The protein resides in the P-body. Functionally, RNA-binding protein involved in post-transcriptional regulation through transcript degradation. The sequence is that of RNA-binding protein VTS1 from Cryptococcus neoformans var. grubii serotype A (strain H99 / ATCC 208821 / CBS 10515 / FGSC 9487) (Filobasidiella neoformans var. grubii).